A 1907-amino-acid chain; its full sequence is Receptor-type tyrosine-protein phosphatase S (1907 aa).

The first 29 residues, 1–29 (MAPTWRPSVVSVVGPVGLFLVLLARGCLA), serve as a signal peptide directing secretion. At 30–1257 (EEPPRFIREP…PQPIVDGEEG (1228 aa)) the chain is on the extracellular side. Ig-like C2-type domains follow at residues 33–123 (PRFI…AKLT), 135–224 (PNID…ANLY), and 232–314 (PRFS…AQIT). Disulfide bonds link Cys-54–Cys-107 and Cys-156–Cys-207. Residues 68–72 (KKGKK) form an important for binding to glycosaminoglycan chains region. N-linked (GlcNAc...) asparagine glycosylation is found at Asn-250 and Asn-295. An intrachain disulfide couples Cys-253 to Cys-298. 8 consecutive Fibronectin type-III domains span residues 321–411 (APGT…TGEQ), 416–510 (APRN…TQQG), 514–603 (QPMN…TLQA), 608–705 (PPQD…TDED), 710–809 (PPRK…TKGA), 810–906 (VLGR…APRG), 907–1008 (FPQI…LARD), and 1011–1095 (SPKN…TAFN). A compositionally biased stretch (low complexity) spans 691–700 (PGPESSPVVV). The tract at residues 691-711 (PGPESSPVVVRTDEDVPSAPP) is disordered. N-linked (GlcNAc...) asparagine glycosylation is present at Asn-720. The N-linked (GlcNAc...) asparagine glycan is linked to Asn-916. The chain crosses the membrane as a helical span at residues 1258-1278 (LIWVIGPVLAVVFIICIVIAI). Over 1279 to 1907 (LLYKNKPDSK…YLGSFDHYAT (629 aa)) the chain is Cytoplasmic. A compositionally biased stretch (basic and acidic residues) spans 1286–1296 (DSKRKDSEPRT). A disordered region spans residues 1286–1313 (DSKRKDSEPRTKCLLNNADLAPHHPKDP). Tyrosine-protein phosphatase domains lie at 1352–1607 (LSQE…LLEA) and 1639–1898 (MELE…ALEY). Residues Asp-1516, 1548–1554 (CSAGVGR), and Gln-1592 each bind substrate. Catalysis depends on Cys-1548, which acts as the Phosphocysteine intermediate. Cys-1839 (phosphocysteine intermediate) is an active-site residue.

It belongs to the protein-tyrosine phosphatase family. Receptor class 2A subfamily. In terms of assembly, binding to large heparan sulfate proteoglycan structures promotes oligomerization. Binding to chondroitin sulfate proteoglycan does not lead to oligomerization. Interacts (via Ig-like domains) with NTRK1 and NTRK3, but does not form detectable complexes with NTRK2. Interacts with PPFIA1, PPFIA2 and PPFIA3. A cleavage occurs, separating the extracellular domain from the transmembrane segment. This process called 'ectodomain shedding' is thought to be involved in receptor desensitization, signal transduction and/or membrane localization. As to expression, detected in brain neocortex (at protein level). Detected in heart, testis and liver. Detected at lower levels in skeletal muscle, brain, spleen and kidney.

The protein localises to the cell membrane. The protein resides in the cell projection. Its subcellular location is the axon. It is found in the perikaryon. It localises to the cytoplasmic vesicle. The protein localises to the secretory vesicle. The protein resides in the synaptic vesicle membrane. Its subcellular location is the synapse. It is found in the synaptosome. It localises to the postsynaptic density. The protein localises to the neuron projection. The protein resides in the growth cone. It carries out the reaction O-phospho-L-tyrosyl-[protein] + H2O = L-tyrosyl-[protein] + phosphate. Cell surface receptor that binds to glycosaminoglycans, including chondroitin sulfate proteoglycans and heparan sulfate proteoglycans. Binding to chondroitin sulfate and heparan sulfate proteoglycans has opposite effects on PTPRS oligomerization and regulation of neurite outgrowth. Contributes to the inhibition of neurite and axonal outgrowth by chondroitin sulfate proteoglycans, also after nerve transection. Plays a role in stimulating neurite outgrowth in response to the heparan sulfate proteoglycan GPC2. Required for normal brain development, especially for normal development of the pituitary gland and the olfactory bulb. Functions as tyrosine phosphatase. Mediates dephosphorylation of NTRK1, NTRK2 and NTRK3. Plays a role in down-regulation of signaling cascades that lead to the activation of Akt and MAP kinases. Down-regulates TLR9-mediated activation of NF-kappa-B, as well as production of TNF, interferon alpha and interferon beta. This chain is Receptor-type tyrosine-protein phosphatase S (Ptprs), found in Rattus norvegicus (Rat).